The following is a 300-amino-acid chain: 4-hydroxy-tetrahydrodipicolinate synthase (300 aa).

Thr-49 contributes to the pyruvate binding site. Tyr-137 serves as the catalytic Proton donor/acceptor. Lys-166 serves as the catalytic Schiff-base intermediate with substrate. Ile-208 provides a ligand contact to pyruvate.

This sequence belongs to the DapA family. Homotetramer; dimer of dimers.

The protein resides in the cytoplasm. The enzyme catalyses L-aspartate 4-semialdehyde + pyruvate = (2S,4S)-4-hydroxy-2,3,4,5-tetrahydrodipicolinate + H2O + H(+). It functions in the pathway amino-acid biosynthesis; L-lysine biosynthesis via DAP pathway; (S)-tetrahydrodipicolinate from L-aspartate: step 3/4. Functionally, catalyzes the condensation of (S)-aspartate-beta-semialdehyde [(S)-ASA] and pyruvate to 4-hydroxy-tetrahydrodipicolinate (HTPA). The polypeptide is 4-hydroxy-tetrahydrodipicolinate synthase (Methanopyrus kandleri (strain AV19 / DSM 6324 / JCM 9639 / NBRC 100938)).